Reading from the N-terminus, the 380-residue chain is tRNA-specific 2-thiouridylase MnmA (380 aa).

ATP contacts are provided by residues 12–19 (GLSGGVDS) and M38. The tract at residues 108–110 (NPD) is interaction with target base in tRNA. C113 serves as the catalytic Nucleophile. A disulfide bond links C113 and C210. G138 serves as a coordination point for ATP. The tract at residues 160-162 (KDQ) is interaction with tRNA. C210 (cysteine persulfide intermediate) is an active-site residue.

The protein belongs to the MnmA/TRMU family.

The protein resides in the cytoplasm. The enzyme catalyses S-sulfanyl-L-cysteinyl-[protein] + uridine(34) in tRNA + AH2 + ATP = 2-thiouridine(34) in tRNA + L-cysteinyl-[protein] + A + AMP + diphosphate + H(+). Catalyzes the 2-thiolation of uridine at the wobble position (U34) of tRNA, leading to the formation of s(2)U34. This Ureaplasma urealyticum serovar 10 (strain ATCC 33699 / Western) protein is tRNA-specific 2-thiouridylase MnmA.